A 426-amino-acid polypeptide reads, in one-letter code: Glutamate-1-semialdehyde 2,1-aminomutase (426 aa).

Lys265 bears the N6-(pyridoxal phosphate)lysine mark.

It belongs to the class-III pyridoxal-phosphate-dependent aminotransferase family. HemL subfamily. Homodimer. Requires pyridoxal 5'-phosphate as cofactor.

Its subcellular location is the cytoplasm. It carries out the reaction (S)-4-amino-5-oxopentanoate = 5-aminolevulinate. It participates in porphyrin-containing compound metabolism; protoporphyrin-IX biosynthesis; 5-aminolevulinate from L-glutamyl-tRNA(Glu): step 2/2. The protein is Glutamate-1-semialdehyde 2,1-aminomutase of Pectobacterium atrosepticum (strain SCRI 1043 / ATCC BAA-672) (Erwinia carotovora subsp. atroseptica).